Consider the following 201-residue polypeptide: uncharacterized protein (201 aa).

The first 19 residues, 1-19 (MKLIVSVFLIGCQFLNILG), serve as a signal peptide directing secretion.

This is an uncharacterized protein from Acheta domesticus (House cricket).